Consider the following 440-residue polypeptide: UDP-glycosyltransferase 87A1 (440 aa).

UDP-alpha-D-glucose-binding positions include S263, C312 to Q314, H329 to E337, and F351 to Q354.

Belongs to the UDP-glycosyltransferase family.

The polypeptide is UDP-glycosyltransferase 87A1 (UGT87A1) (Arabidopsis thaliana (Mouse-ear cress)).